We begin with the raw amino-acid sequence, 324 residues long: Adipolin (324 aa).

An N-terminal signal peptide occupies residues 1 to 24; the sequence is MRCWVWLLVAIVLCQQLSVVRVLA. Disordered stretches follow at residues 28–66 and 83–121; these read ERKK…DPGL and GANS…MPGA. The span at 40 to 49 shows a compositional bias: polar residues; the sequence is EPFNVSLSNS. An N-linked (GlcNAc...) asparagine glycan is attached at Asn-43. Residues 50 to 60 show a composition bias toward basic and acidic residues; sequence EELHETDKLSE. The span at 86–98 shows a compositional bias: basic residues; it reads SKKKCKGKDKKLR. Positions 103-118 are enriched in pro residues; the sequence is PPGPPGPQGPPGPPGM. In terms of domain architecture, C1q spans 169-324; sequence YRRVDEGFHC…SDFMGILMGL (156 aa).

Belongs to the adipolin/erythroferrone family. As to quaternary structure, homomultimer; disulfide-linked.

The protein localises to the secreted. Its function is as follows. Insulin-sensitizing adipocyte-secreted protein (adipokine) that regulates glucose metabolism in liver and adipose tissue. In Xenopus tropicalis (Western clawed frog), this protein is Adipolin (c1qtnf12).